The sequence spans 355 residues: Protein RecA (355 aa).

Gly65 to Thr72 is a binding site for ATP.

It belongs to the RecA family.

It is found in the cytoplasm. Functionally, can catalyze the hydrolysis of ATP in the presence of single-stranded DNA, the ATP-dependent uptake of single-stranded DNA by duplex DNA, and the ATP-dependent hybridization of homologous single-stranded DNAs. It interacts with LexA causing its activation and leading to its autocatalytic cleavage. In Pseudomonas putida (strain W619), this protein is Protein RecA.